The chain runs to 339 residues: Dihydroorotate dehydrogenase (quinone) (339 aa).

Residues 62–66 (AGMDK) and Thr-86 contribute to the FMN site. Lys-66 is a binding site for substrate. Substrate is bound at residue 111–115 (NRMGF). FMN is bound by residues Asn-139 and Asn-172. Position 172 (Asn-172) interacts with substrate. Ser-175 serves as the catalytic Nucleophile. Residue Asn-177 participates in substrate binding. Residues Lys-217 and Thr-245 each coordinate FMN. Residue 246–247 (NT) participates in substrate binding. FMN is bound by residues Gly-268, Gly-297, and 318–319 (YS).

Belongs to the dihydroorotate dehydrogenase family. Type 2 subfamily. As to quaternary structure, monomer. It depends on FMN as a cofactor.

Its subcellular location is the cell membrane. It carries out the reaction (S)-dihydroorotate + a quinone = orotate + a quinol. It participates in pyrimidine metabolism; UMP biosynthesis via de novo pathway; orotate from (S)-dihydroorotate (quinone route): step 1/1. In terms of biological role, catalyzes the conversion of dihydroorotate to orotate with quinone as electron acceptor. The sequence is that of Dihydroorotate dehydrogenase (quinone) from Shewanella baltica (strain OS155 / ATCC BAA-1091).